The primary structure comprises 156 residues: ATP synthase subunit b (156 aa).

Residues 7-26 (LIGQLIAFALFVAFCMKYVW) form a helical membrane-spanning segment.

The protein belongs to the ATPase B chain family. As to quaternary structure, F-type ATPases have 2 components, F(1) - the catalytic core - and F(0) - the membrane proton channel. F(1) has five subunits: alpha(3), beta(3), gamma(1), delta(1), epsilon(1). F(0) has three main subunits: a(1), b(2) and c(10-14). The alpha and beta chains form an alternating ring which encloses part of the gamma chain. F(1) is attached to F(0) by a central stalk formed by the gamma and epsilon chains, while a peripheral stalk is formed by the delta and b chains.

Its subcellular location is the cell inner membrane. Functionally, f(1)F(0) ATP synthase produces ATP from ADP in the presence of a proton or sodium gradient. F-type ATPases consist of two structural domains, F(1) containing the extramembraneous catalytic core and F(0) containing the membrane proton channel, linked together by a central stalk and a peripheral stalk. During catalysis, ATP synthesis in the catalytic domain of F(1) is coupled via a rotary mechanism of the central stalk subunits to proton translocation. Component of the F(0) channel, it forms part of the peripheral stalk, linking F(1) to F(0). The chain is ATP synthase subunit b from Haemophilus ducreyi (strain 35000HP / ATCC 700724).